The following is a 100-amino-acid chain: Apolipoprotein C-II (100 aa).

Residues 1-22 (MGSRFLLALFLILLVLGCEVQA) form the signal peptide. The tract at residues 66–74 (SVDEKLRDM) is lipid binding. A lipoprotein lipase cofactor region spans residues 78 to 100 (SSAAMTTYASIFTDQILTLLKGE).

The protein belongs to the apolipoprotein C2 family. In terms of processing, proapolipoprotein C-II is synthesized as a sialic acid containing glycoprotein which is subsequently desialylated prior to its proteolytic processing. Post-translationally, proapolipoprotein C-II, the major form found in plasma undergoes proteolytic cleavage of its N-terminal hexapeptide to generate the mature form apolipoprotein C-II, which occurs as the minor form in plasma.

Its subcellular location is the secreted. Functionally, component of chylomicrons, very low-density lipoproteins (VLDL), low-density lipoproteins (LDL), and high-density lipoproteins (HDL) in plasma. Plays an important role in lipoprotein metabolism as an activator of lipoprotein lipase. The polypeptide is Apolipoprotein C-II (APOC2) (Microtus ochrogaster (Prairie vole)).